Here is a 428-residue protein sequence, read N- to C-terminus: MTATITDINAHEILDSRANPTLEVRVTLSSQAYGCAAVPSGASTGEREAVELRDNDLERYGGKGVLQAVENVNGPIRDALLGQDPRSQEEIDRIMIELDGTENKANLGANAILGVSLAVAYAAANNADLPLYRYLGGDGGPFSMPVPMMNIINGGAHATNNLDFQEFMIVPVGAPTFAEALRYGAEVFHALKKRLVSRGLMSAVGDEGGFAPDLPNNEAAFELILEAIEDANYVPGKDIYLALDAASSELYQNGRYDFENNQLTSEEMIDRLTEWTKKYPVISIEDGLSENDWAGWKLLTERLENKVQLVGDDIFVTNPDILEKGIKKNIANAILVKLNQIGTLTETLATVGLAKSNKYGVIISHRSGETEDTTIADLAVATDARQIKTGSLCRSDRVAKYNRLLQIERELNDQAPYAGKEAFLFNRK.

Q165 provides a ligand contact to (2R)-2-phosphoglycerate. E207 serves as the catalytic Proton donor. Mg(2+)-binding residues include D244, E285, and D312. (2R)-2-phosphoglycerate is bound by residues K337, R366, S367, and K388. K337 (proton acceptor) is an active-site residue.

It belongs to the enolase family. As to quaternary structure, component of the RNA degradosome, a multiprotein complex involved in RNA processing and mRNA degradation. The cofactor is Mg(2+).

Its subcellular location is the cytoplasm. It localises to the secreted. The protein localises to the cell surface. It catalyses the reaction (2R)-2-phosphoglycerate = phosphoenolpyruvate + H2O. It functions in the pathway carbohydrate degradation; glycolysis; pyruvate from D-glyceraldehyde 3-phosphate: step 4/5. In terms of biological role, catalyzes the reversible conversion of 2-phosphoglycerate (2-PG) into phosphoenolpyruvate (PEP). It is essential for the degradation of carbohydrates via glycolysis. The protein is Enolase of Coxiella burnetii (strain CbuK_Q154) (Coxiella burnetii (strain Q154)).